The primary structure comprises 1130 residues: Serine/threonine-protein kinase LATS1 (1130 aa).

Basic and acidic residues predominate over residues 1–11; the sequence is MKRSEKPEGYR. The disordered stretch occupies residues 1–71; sequence MKRSEKPEGY…PRQVRNPPKF (71 aa). The span at 19-30 shows a compositional bias: polar residues; the sequence is PASNYTVSSRQM. Positions 46 to 64 are enriched in basic and acidic residues; sequence DAAKAEHNMSKMSTEDPRQ. In terms of domain architecture, UBA spans 100–141; that stretch reads EVNPQMLQDLQAAGFDEDMVIQALQKTNNRSIEAAIEFISKM. A disordered region spans residues 149 to 276; it reads EQMAAAAARP…SWEPNSQTKR (128 aa). Polar residues predominate over residues 167–179; that stretch reads NVQQSVNRKQSWK. Residues 235–268 are compositionally biased toward pro residues; it reads NPPPPPQVRSVTPPPPPRGQTPPPRGTTPPPPSW. The residue at position 246 (T246) is a Phosphothreonine. The residue at position 278 (S278) is a Phosphoserine. 4 disordered regions span residues 294 to 321, 365 to 405, 432 to 484, and 515 to 631; these read GAWQEGYPPPPLNTSPMNPPNQGQRGIS, AGTV…NGSI, NWPQ…PSAT, and THPS…ESRI. Positions 300-312 are enriched in pro residues; sequence YPPPPLNTSPMNP. The PPxY motif 1 signature appears at 373–376; it reads PPPY. Over residues 381 to 405 the composition is skewed to polar residues; that stretch reads ANGQSPSALQTGGSAAPSSYTNGSI. Low complexity predominate over residues 434-447; it reads PQSSSAPAQSSPSS. Over residues 454–482 the composition is skewed to polar residues; the sequence is WQPNIPVRSNSFNNPLGNRASHSANSQPS. Residue S464 is modified to Phosphoserine; by NUAK1 and NUAK2. The interaction with YAP1 stretch occupies residues 526 to 655; sequence TVQPSPFPEG…HVENVLKSHQ (130 aa). Residues 556-559 carry the PPxY motif 2 motif; the sequence is PPPY. Positions 579 to 609 are enriched in basic and acidic residues; sequence PSKEDQPSLPKEDESEKSYENVDSGDKEKKQ. Phosphoserine is present on S613. Basic and acidic residues predominate over residues 621 to 630; sequence KKDEERRESR. S674 carries the phosphoserine modification. The 306-residue stretch at 705–1010 folds into the Protein kinase domain; that stretch reads FVKIKTLGIG…ADEIKAHPFF (306 aa). ATP contacts are provided by residues 711 to 719 and K734; that span reads LGIGAFGEV. D828 functions as the Proton acceptor in the catalytic mechanism. At S909 the chain carries Phosphoserine; by STK3/MST2. Positions 1011 to 1090 constitute an AGC-kinase C-terminal domain; it reads KTIDFSSDLR…RRFFDDNGYP (80 aa). The residue at position 1079 (T1079) is a Phosphothreonine; by STK3/MST2. Residues 1104-1130 are disordered; sequence SQGSEQQSDEDDQNTGSEIKNRDLVYV.

It belongs to the protein kinase superfamily. AGC Ser/Thr protein kinase family. Complexes with CDK1 in early mitosis. LATS1-associated CDK1 has no mitotic cyclin partner and no apparent kinase activity. Binds phosphorylated ZYX, locating this protein to the mitotic spindle and suggesting a role for actin regulatory proteins during mitosis. Binds to and colocalizes with LIMK1 at the actomyosin contractile ring during cytokinesis. Interacts (via PPxY motif 2) with YAP1 (via WW domains). Interacts with MOB1A and MOB1B. Interacts with LIMD1, WTIP and AJUBA. Interacts with ESR1, DCAF1 and DCAF13; probably recruits DCAF1 and DCAF13 to ESR1 to promote ESR1 ubiquitination and ubiquitin-mediated proteasomal degradation. Interacts with STK3/MST2; this interaction is inhibited in the presence of DLG5. Interacts with SCRIB in the presence of DLG5. Interacts with WWTR1/TAZ. Interacts with WWC1, WWC2 and WWC3 (via their WW domains). The cofactor is Mg(2+). Autophosphorylated and phosphorylated during M-phase of the cell cycle. Phosphorylated by STK3/MST2 at Ser-909 and Thr-1079, which results in its activation. Phosphorylated by MAP4Ks; in parallel to STK3/MST2 and resulting to its activation. Phosphorylation at Ser-464 by NUAK1 and NUAK2 leads to decreased protein level and is required to regulate cellular senescence and cellular ploidy. Expressed in all adult tissues examined except for lung and kidney.

It is found in the cytoplasm. The protein resides in the cytoskeleton. It localises to the microtubule organizing center. The protein localises to the centrosome. Its subcellular location is the spindle. It is found in the midbody. The protein resides in the spindle pole body. It catalyses the reaction L-seryl-[protein] + ATP = O-phospho-L-seryl-[protein] + ADP + H(+). The enzyme catalyses L-threonyl-[protein] + ATP = O-phospho-L-threonyl-[protein] + ADP + H(+). Its function is as follows. Negative regulator of YAP1 in the Hippo signaling pathway that plays a pivotal role in organ size control and tumor suppression by restricting proliferation and promoting apoptosis. The core of this pathway is composed of a kinase cascade wherein STK3/MST2 and STK4/MST1, in complex with its regulatory protein SAV1, phosphorylates and activates LATS1/2 in complex with its regulatory protein MOB1, which in turn phosphorylates and inactivates YAP1 oncoprotein and WWTR1/TAZ. Phosphorylation of YAP1 by LATS1 inhibits its translocation into the nucleus to regulate cellular genes important for cell proliferation, cell death, and cell migration. Acts as a tumor suppressor which plays a critical role in maintenance of ploidy through its actions in both mitotic progression and the G1 tetraploidy checkpoint. Negatively regulates G2/M transition by down-regulating CDK1 kinase activity. Involved in the control of p53 expression. Affects cytokinesis by regulating actin polymerization through negative modulation of LIMK1. May also play a role in endocrine function. Plays a role in mammary gland epithelial cell differentiation, both through the Hippo signaling pathway and the intracellular estrogen receptor signaling pathway by promoting the degradation of ESR1. Acts as an activator of the NLRP3 inflammasome by mediating phosphorylation of 'Ser-265' of NLRP3 following NLRP3 palmitoylation, promoting NLRP3 activation by NEK7. This is Serine/threonine-protein kinase LATS1 from Homo sapiens (Human).